The sequence spans 227 residues: Pectinesterase inhibitor 28 (227 aa).

The signal sequence occupies residues 1–25 (MASSMAPAAAMAILLLALLMPATLC). The disordered stretch occupies residues 28–50 (SGPPSSKHGHGGHAKRAPPPASP). The span at 34 to 43 (KHGHGGHAKR) shows a compositional bias: basic residues. Cysteines 66 and 75 form a disulfide. N-linked (GlcNAc...) asparagine glycosylation is found at Asn67, Asn104, and Asn117. Cys139 and Cys179 form a disulfide bridge.

Belongs to the PMEI family. Expressed in roots, leaves, culms and flag leaves.

It is found in the secreted. It localises to the extracellular space. The protein resides in the apoplast. Pectin methylesterase (PME) inhibitor that inhibits PME in vitro. Functions as a critical structural modulator by regulating the degree of pectin methylesterification and the physiochemical properties of the cell wall components. The sequence is that of Pectinesterase inhibitor 28 from Oryza sativa subsp. japonica (Rice).